A 144-amino-acid chain; its full sequence is MLVPKRVKHRREFRGKMRGEAKGGKEVTFGKYGLKALDSHWITNRQIEAARIAMTRYMKRGGKVWIKIFPHKSYTAKAIGVRMGSGKGAPEGWVAPVKRGKVLFEIDGVSEEVAREALRLASHKLPVKTKFVQREEVGGESNEG.

Belongs to the universal ribosomal protein uL16 family. In terms of assembly, part of the 50S ribosomal subunit.

Binds 23S rRNA and is also seen to make contacts with the A and possibly P site tRNAs. The protein is Large ribosomal subunit protein uL16 of Ligilactobacillus salivarius (strain UCC118) (Lactobacillus salivarius).